A 148-amino-acid chain; its full sequence is D-aminoacyl-tRNA deacylase (148 aa).

Residues 137 to 138 (GP) carry the Gly-cisPro motif, important for rejection of L-amino acids motif.

It belongs to the DTD family. Homodimer.

It localises to the cytoplasm. It carries out the reaction glycyl-tRNA(Ala) + H2O = tRNA(Ala) + glycine + H(+). It catalyses the reaction a D-aminoacyl-tRNA + H2O = a tRNA + a D-alpha-amino acid + H(+). An aminoacyl-tRNA editing enzyme that deacylates mischarged D-aminoacyl-tRNAs. Also deacylates mischarged glycyl-tRNA(Ala), protecting cells against glycine mischarging by AlaRS. Acts via tRNA-based rather than protein-based catalysis; rejects L-amino acids rather than detecting D-amino acids in the active site. By recycling D-aminoacyl-tRNA to D-amino acids and free tRNA molecules, this enzyme counteracts the toxicity associated with the formation of D-aminoacyl-tRNA entities in vivo and helps enforce protein L-homochirality. This Lactiplantibacillus plantarum (strain ATCC BAA-793 / NCIMB 8826 / WCFS1) (Lactobacillus plantarum) protein is D-aminoacyl-tRNA deacylase.